A 437-amino-acid polypeptide reads, in one-letter code: Methylenetetrahydrofolate--tRNA-(uracil-5-)-methyltransferase TrmFO (437 aa).

Position 8–13 (8–13 (GAGLAG)) interacts with FAD.

It belongs to the MnmG family. TrmFO subfamily. FAD serves as cofactor.

The protein localises to the cytoplasm. It carries out the reaction uridine(54) in tRNA + (6R)-5,10-methylene-5,6,7,8-tetrahydrofolate + NADH + H(+) = 5-methyluridine(54) in tRNA + (6S)-5,6,7,8-tetrahydrofolate + NAD(+). The enzyme catalyses uridine(54) in tRNA + (6R)-5,10-methylene-5,6,7,8-tetrahydrofolate + NADPH + H(+) = 5-methyluridine(54) in tRNA + (6S)-5,6,7,8-tetrahydrofolate + NADP(+). Catalyzes the folate-dependent formation of 5-methyl-uridine at position 54 (M-5-U54) in all tRNAs. In Desulfitobacterium hafniense (strain Y51), this protein is Methylenetetrahydrofolate--tRNA-(uracil-5-)-methyltransferase TrmFO.